Reading from the N-terminus, the 682-residue chain is Protein SPT2 homolog (682 aa).

Residues 1–569 (MDFREILLIA…PLLSGYRSAQ (569 aa)) are important for interaction with DNA. Lys-37 is covalently cross-linked (Glycyl lysine isopeptide (Lys-Gly) (interchain with G-Cter in SUMO2)). Positions 46–82 (AFLRRKEEELRQKALEEKKRKEELVKKRIELKHDKKA) form a coiled coil. The tract at residues 80-170 (KKARAMAKRT…SAPSPMNFTD (91 aa)) is disordered. The span at 101–111 (VEEKTKKKQLV) shows a compositional bias: basic and acidic residues. A compositionally biased stretch (acidic residues) spans 121-131 (QEYDVEEEDFI). Low complexity predominate over residues 156–165 (KAPLKSAPSP). Lys-186 participates in a covalent cross-link: Glycyl lysine isopeptide (Lys-Gly) (interchain with G-Cter in SUMO2). Positions 187-208 (VVKKAEDRPLTAEELREREFLE) are enriched in basic and acidic residues. Disordered regions lie at residues 187–533 (VVKK…TKPR) and 549–595 (RSSN…DEYD). Composition is skewed to polar residues over residues 267 to 280 (STAS…SSPK), 317 to 334 (STCS…TQKS), 371 to 393 (PGSN…TLSS), 400 to 409 (QNGSSSSGPE), and 419 to 432 (ASNS…LNGT). At Ser-277 the chain carries Phosphoserine. 2 stretches are compositionally biased toward low complexity: residues 435–460 (PGRP…RPVG) and 490–504 (SGPG…PAGR). The tract at residues 570–682 (GPQRLPFPTG…RRKAKKLKRH (113 aa)) is important for interaction with histones. An N6-acetyllysine modification is found at Lys-581. The span at 586 to 595 (YEEDDDDEYD) shows a compositional bias: acidic residues. Ser-596 is modified (phosphoserine). Composition is skewed to basic and acidic residues over residues 641-652 (SWKEQQKEEAKS) and 663-672 (EMRREEEELK). A disordered region spans residues 641–682 (SWKEQQKEEAKSLRLGMQEDLEEMRREEEELKRRKAKKLKRH). Residues 642–682 (WKEQQKEEAKSLRLGMQEDLEEMRREEEELKRRKAKKLKRH) are a coiled coil. The segment covering 673–682 (RRKAKKLKRH) has biased composition (basic residues).

The protein belongs to the SPT2 family. In terms of assembly, interacts with histones. Interacts with a heterotetrameric complex formed by histone H3 and H4, especially when the histone tetramer is not bound to DNA. Interacts with histone H3.3.

It is found in the nucleus. The protein localises to the nucleolus. In terms of biological role, histone chaperone that stabilizes pre-existing histone tetramers and regulates replication-independent histone exchange on chromatin. Required for normal chromatin refolding in the coding region of transcribed genes, and for the suppression of spurious transcription. Binds DNA and histones and promotes nucleosome assembly (in vitro). Facilitates formation of tetrameric histone complexes containing histone H3 and H4. Modulates RNA polymerase 1-mediated transcription. Binds DNA, with a preference for branched DNA species, such as Y-form DNA and Holliday junction DNA. In Mus musculus (Mouse), this protein is Protein SPT2 homolog (Spty2d1).